The chain runs to 101 residues: Co-chaperonin GroES (101 aa).

The protein belongs to the GroES chaperonin family. In terms of assembly, heptamer of 7 subunits arranged in a ring. Interacts with the chaperonin GroEL.

Its subcellular location is the cytoplasm. Functionally, together with the chaperonin GroEL, plays an essential role in assisting protein folding. The GroEL-GroES system forms a nano-cage that allows encapsulation of the non-native substrate proteins and provides a physical environment optimized to promote and accelerate protein folding. GroES binds to the apical surface of the GroEL ring, thereby capping the opening of the GroEL channel. In Lawsonia intracellularis, this protein is Co-chaperonin GroES.